An 884-amino-acid polypeptide reads, in one-letter code: Lon protease homolog 2, peroxisomal (884 aa).

In terms of domain architecture, Lon N-terminal spans 12-255 (LAILPFRNKV…KATELVDRHL (244 aa)). The disordered stretch occupies residues 67–101 (SLLSPGVGSDSGEGGSKAPGGSAGESTKQDTKNGK). A compositionally biased stretch (gly residues) spans 75–89 (SDSGEGGSKAPGGSA). 408 to 415 (GPPGVGKT) lines the ATP pocket. The Lon proteolytic domain occupies 689–874 (VASPGVSVGL…EEVLDHAFEG (186 aa)). Residues Ser780 and Lys823 contribute to the active site. Positions 882–884 (SKL) match the Microbody targeting signal motif.

It belongs to the peptidase S16 family. Expressed in roots, leaves and panicles.

It is found in the peroxisome matrix. It catalyses the reaction Hydrolysis of proteins in presence of ATP.. Its function is as follows. ATP-dependent serine protease that mediates the selective degradation of misfolded and unassembled polypeptides in the peroxisomal matrix. Necessary for type 2 peroxisome targeting signal (PTS2)-containing protein processing and facilitates peroxisome matrix protein import. This Oryza sativa subsp. indica (Rice) protein is Lon protease homolog 2, peroxisomal (LON1).